The primary structure comprises 950 residues: Inactive atromentin synthetase invA4 (950 aa).

The tract at residues 37–460 (SRAVSQYPNH…SGRIKDTVVV (424 aa)) is adenylation (A) domain. Positions 592-670 (APSTETEKTL…TLAKYVDSLV (79 aa)) constitute a Carrier domain. Positions 597-667 (TEKTLAGIYA…EIITLAKYVD (71 aa)) are thiolation and peptide carrier (T) domain. At Ser-629 the chain carries O-(pantetheine 4'-phosphoryl)serine. Positions 693–797 (PIFMVHPGIG…GIIDMIPHHM (105 aa)) are thioesterase (TE) domain.

It belongs to the ATP-dependent AMP-binding enzyme family.

Inactive atromentin synthetase homolog. Does not accept 4-hydroxyphenylpyruvate (4-HPP) as substrate. This is Inactive atromentin synthetase invA4 (invA4) from Paxillus involutus (Naked brimcap).